A 245-amino-acid chain; its full sequence is DNA terminal protein (245 aa).

Positions 4 to 55 (KRLKKKLETKRKKSLLVSEGYSKKETKKLKGRELETVYKKKAHNRKNRERAR) match the Nuclear localization signal motif. Residue tyrosine 194 is modified to O-(5'-phospho-DNA)-tyrosine.

As to quaternary structure, interacts with the DNA-binding protein P1.

The protein resides in the virion. Its function is as follows. Acts as a primer for viral genomic replication. DNA terminal protein is covalently linked to the 5'-ends of both strands of the genome through a phosphodiester bond between the beta-hydroxyl group of a tyrosine residue and the 5'-phosphate of the terminal deoxythymidylate. This protein is essential for DNA replication and is involved in the priming of DNA elongation. This chain is DNA terminal protein, found in Bacillus thuringiensis (Bacillus thuringiensis bacteriophage Bam35c).